The following is a 169-amino-acid chain: Interleukin-2 (169 aa).

The signal sequence occupies residues 1–20; the sequence is MYSMQLASCVTLTLVLLVNS. Residue T23 is glycosylated (O-linked (GalNAc...) threonine). A disulfide bridge connects residues C92 and C140.

Belongs to the IL-2 family. In terms of tissue distribution, produced by immune cells including dendritic cells. In contrast, macrophages do not produce IL2 upon bacterial stimulation.

The protein resides in the secreted. In terms of biological role, cytokine produced by activated CD4-positive helper T-cells and to a lesser extend activated CD8-positive T-cells and natural killer (NK) cells that plays pivotal roles in the immune response and tolerance. Binds to a receptor complex composed of either the high-affinity trimeric IL-2R (IL2RA/CD25, IL2RB/CD122 and IL2RG/CD132) or the low-affinity dimeric IL-2R (IL2RB and IL2RG). Interaction with the receptor leads to oligomerization and conformation changes in the IL-2R subunits resulting in downstream signaling starting with phosphorylation of JAK1 and JAK3. In turn, JAK1 and JAK3 phosphorylate the receptor to form a docking site leading to the phosphorylation of several substrates including STAT5. This process leads to activation of several pathways including STAT, phosphoinositide-3-kinase/PI3K and mitogen-activated protein kinase/MAPK pathways. Functions as a T-cell growth factor and can increase NK-cell cytolytic activity as well. Promotes strong proliferation of activated B-cells and subsequently immunoglobulin production. Plays a pivotal role in regulating the adaptive immune system by controlling the survival and proliferation of regulatory T-cells, which are required for the maintenance of immune tolerance. Moreover, participates in the differentiation and homeostasis of effector T-cell subsets, including Th1, Th2, Th17 as well as memory CD8-positive T-cells. The sequence is that of Interleukin-2 (Il2) from Mus musculus (Mouse).